A 478-amino-acid polypeptide reads, in one-letter code: RNA exonuclease 3 (478 aa).

Residues 320–465 (VLALDCEMAF…EDAIAAMDVI (146 aa)) enclose the Exonuclease domain.

It belongs to the REXO1/REXO3 family.

Its subcellular location is the cytoplasm. It is found in the nucleus. 3' to 5' exoribonuclease required for proper 3' end maturation of MRP RNA and of the U5L snRNA. This Kluyveromyces lactis (strain ATCC 8585 / CBS 2359 / DSM 70799 / NBRC 1267 / NRRL Y-1140 / WM37) (Yeast) protein is RNA exonuclease 3 (REX3).